The chain runs to 176 residues: MGRRGVTVWFTGLSGAGKTTLSCGVAQQLQALGLPVEVLDGDLVRQHLSKELGFSRADRDENVRRIGFVAEMLTRHGVIVLVSAISPYRATRQEVRQQIGNFIEVFVDAPLEVCEQRDVKGLYRKARAGLIRHFTGIDDPYEPPEYPEVVCKTAEQSISECIDLVMQSLRSHGYLQ.

An ATP-binding site is contributed by 12-19; sequence GLSGAGKT. Ser86 serves as the catalytic Phosphoserine intermediate.

Belongs to the APS kinase family.

It carries out the reaction adenosine 5'-phosphosulfate + ATP = 3'-phosphoadenylyl sulfate + ADP + H(+). The protein operates within sulfur metabolism; hydrogen sulfide biosynthesis; sulfite from sulfate: step 2/3. In terms of biological role, catalyzes the synthesis of activated sulfate. This chain is Adenylyl-sulfate kinase, found in Synechococcus sp. (strain JA-3-3Ab) (Cyanobacteria bacterium Yellowstone A-Prime).